Reading from the N-terminus, the 110-residue chain is Snake venom vascular endothelial growth factor toxin (110 aa).

The residue at position 1 (Q1) is a Pyrrolidone carboxylic acid. 3 disulfide bridges follow: C14-C56, C45-C91, and C49-C93.

Belongs to the PDGF/VEGF growth factor family. Snake venom VEGF subfamily. In terms of assembly, homodimer; disulfide-linked. As to expression, expressed by the venom gland.

Its subcellular location is the secreted. Its function is as follows. Snake venom VEGFs that may contribute to venom dispersion and prey subjugation by inducing vascular permeability and hypotension. This protein potently stimulates dermal human microvascular endothelial cell (dHMVEC) proliferation in a VEGFR-2 dependent manner. This stimulatory effect is correlated with activation of the MAPK Erk1/2 signaling pathway. It also appears to be a chemoattractant for migration of these cells and stimulates their radial migration in a collagen gel. In vivo, it induces angiogenesis in a Japanese quail assay. This pro-angiogenic effect may also be related to its interaction with VEGFR-2. In addition, it may induce an increase in capillary permeability after intradermal injection, as well as a drastic hypotensive effect after intravenous injection. The hypotension is mediated by nitric oxide (NO), which is produced by VEGF-activated endothelium NO synthase. The protein is Snake venom vascular endothelial growth factor toxin of Daboia palaestinae (Palestine viper).